The chain runs to 1043 residues: Unconventional myosin-Ia (1043 aa).

The Myosin motor domain occupies 8–694; the sequence is VGVEDLVLLE…TLFYLEEQRR (687 aa). 101–108 contributes to the ATP binding site; sequence GESGSGKT. The actin-binding stretch occupies residues 571 to 593; it reads VAILMKNLYSKSPNYIRCIKPNE. 3 IQ domains span residues 697 to 719, 720 to 742, and 743 to 772; these read LQQL…HYQL, MRKS…CYGK, and IKAS…SEAA. In terms of domain architecture, TH1 spans 858-1042; sequence KASYPQSVPI…KGSHCLEVTV (185 aa).

The protein belongs to the TRAFAC class myosin-kinesin ATPase superfamily. Myosin family. Phosphorylated by ALPK1.

Functionally, involved in directing the movement of organelles along actin filaments. The polypeptide is Unconventional myosin-Ia (MYO1A) (Homo sapiens (Human)).